The chain runs to 98 residues: NADH-ubiquinone oxidoreductase chain 4L (98 aa).

Transmembrane regions (helical) follow at residues 1 to 21, 26 to 46, and 61 to 81; these read MSPIFINITLAFTISLLGMLV, LMASLLCLEGMMMSLFITIAL, and ITLLVFAACETAVGLALLVSI.

This sequence belongs to the complex I subunit 4L family. As to quaternary structure, core subunit of respiratory chain NADH dehydrogenase (Complex I) which is composed of 45 different subunits.

It localises to the mitochondrion inner membrane. It catalyses the reaction a ubiquinone + NADH + 5 H(+)(in) = a ubiquinol + NAD(+) + 4 H(+)(out). Its function is as follows. Core subunit of the mitochondrial membrane respiratory chain NADH dehydrogenase (Complex I) which catalyzes electron transfer from NADH through the respiratory chain, using ubiquinone as an electron acceptor. Part of the enzyme membrane arm which is embedded in the lipid bilayer and involved in proton translocation. This is NADH-ubiquinone oxidoreductase chain 4L (MT-ND4L) from Chlorocebus aethiops (Green monkey).